Reading from the N-terminus, the 395-residue chain is MLDQQTIATIKSTIPLLAETGPALTAHFYQRMFHHNPELKDIFNMSNQRNGDQREALFNAICAYATHIENLPALLPAVERIAQKHASFNIQPEQYQIVGTHLLATLEEMFQPGQAVLDAWGKAYGVLANVFIQRESDIYQQSAGQNGGWHGIRPFRIVAKQPQSSLITSFTLEPVDGGPIAAFRPGQYLAVYIRDKRFEYQEIRQYSLTNEPNGRYYRIAVKRETMGSVSGYLHDVAREGDVIELAAPHGDFYLEVTPETPVALISAGVGQTPMLSMLHSLKNQQHQADIFWLHAAENTEVHAFADEIADVAATLPQLQSYVWYREASSEAARSAHAFHGLMALKDLPTPLPMTNLHCYLCGPVAFMQFAARQLLELGITESQIHYECFGPHKVI.

In terms of domain architecture, Globin spans 1–136 (MLDQQTIATI…LANVFIQRES (136 aa)). Histidine 85 serves as a coordination point for heme b. Catalysis depends on charge relay system residues tyrosine 95 and glutamate 135. Residues 147 to 395 (GGWHGIRPFR…YECFGPHKVI (249 aa)) are reductase. The FAD-binding FR-type domain occupies 150–255 (HGIRPFRIVA…AAPHGDFYLE (106 aa)). FAD-binding positions include tyrosine 188 and 204-207 (RQYS). 268–273 (GVGQTP) serves as a coordination point for NADP(+). Residue 388 to 391 (CFGP) participates in FAD binding.

This sequence belongs to the globin family. Two-domain flavohemoproteins subfamily. The protein in the C-terminal section; belongs to the flavoprotein pyridine nucleotide cytochrome reductase family. Heme b is required as a cofactor. Requires FAD as cofactor.

It localises to the cytoplasm. It carries out the reaction 2 nitric oxide + NADPH + 2 O2 = 2 nitrate + NADP(+) + H(+). It catalyses the reaction 2 nitric oxide + NADH + 2 O2 = 2 nitrate + NAD(+) + H(+). In terms of biological role, is involved in NO detoxification in an aerobic process, termed nitric oxide dioxygenase (NOD) reaction that utilizes O(2) and NAD(P)H to convert NO to nitrate, which protects the bacterium from various noxious nitrogen compounds. Therefore, plays a central role in the inducible response to nitrosative stress. The protein is Flavohemoprotein (hmp) of Dickeya dadantii (strain 3937) (Erwinia chrysanthemi (strain 3937)).